Here is a 319-residue protein sequence, read N- to C-terminus: MSSQLEALRRHTTVVADTGDFEAMRALRPTDATTNPSLILKAVQKEAYRPLLQQVVRDHRGAPLAELTDRLLVAFGREILNIVPGRVSTEVDARLSFDTRATVERGRGLIALYEAAGIPRERVLIKTASTWEGIQAARLLQADGIRCNLTLLFSLPQAVACADAGVQLISPFVGRIYDWYKKAAGADWVEAERAGANDPGVQSVTEIYRYYKRHGITTEIMGASFRNKGQILALAGCDLLTISPELLAELDGAQGDVPVRLTRDDEAGEVPARRPADEVWFRTELNANAMATEKLAEGIRLFSADAIKLDALLGGAAGR.

K126 serves as the catalytic Schiff-base intermediate with substrate.

The protein belongs to the transaldolase family. Type 1 subfamily. In terms of assembly, homodimer.

It localises to the cytoplasm. The catalysed reaction is D-sedoheptulose 7-phosphate + D-glyceraldehyde 3-phosphate = D-erythrose 4-phosphate + beta-D-fructose 6-phosphate. The protein operates within carbohydrate degradation; pentose phosphate pathway; D-glyceraldehyde 3-phosphate and beta-D-fructose 6-phosphate from D-ribose 5-phosphate and D-xylulose 5-phosphate (non-oxidative stage): step 2/3. In terms of biological role, transaldolase is important for the balance of metabolites in the pentose-phosphate pathway. This Bordetella petrii (strain ATCC BAA-461 / DSM 12804 / CCUG 43448) protein is Transaldolase.